The following is a 400-amino-acid chain: Acetate kinase (400 aa).

Residue asparagine 10 coordinates Mg(2+). Lysine 17 lines the ATP pocket. Arginine 91 serves as a coordination point for substrate. Aspartate 150 (proton donor/acceptor) is an active-site residue. ATP-binding positions include 210–214, 285–287, and 333–337; these read HLGNG, DCR, and GIGEN. A Mg(2+)-binding site is contributed by glutamate 387.

The protein belongs to the acetokinase family. As to quaternary structure, homodimer. Requires Mg(2+) as cofactor. It depends on Mn(2+) as a cofactor.

The protein localises to the cytoplasm. The enzyme catalyses acetate + ATP = acetyl phosphate + ADP. It functions in the pathway metabolic intermediate biosynthesis; acetyl-CoA biosynthesis; acetyl-CoA from acetate: step 1/2. In terms of biological role, catalyzes the formation of acetyl phosphate from acetate and ATP. Can also catalyze the reverse reaction. In Erwinia tasmaniensis (strain DSM 17950 / CFBP 7177 / CIP 109463 / NCPPB 4357 / Et1/99), this protein is Acetate kinase.